A 417-amino-acid polypeptide reads, in one-letter code: Queuine tRNA-ribosyltransferase accessory subunit 2 (417 aa).

Positions 324, 326, 329, and 355 each coordinate Zn(2+).

It belongs to the queuine tRNA-ribosyltransferase family. QTRT2 subfamily. As to quaternary structure, heterodimer of a catalytic subunit and an accessory subunit. The cofactor is Zn(2+).

It is found in the cytoplasm. Non-catalytic subunit of the queuine tRNA-ribosyltransferase (TGT) that catalyzes the base-exchange of a guanine (G) residue with queuine (Q) at position 34 (anticodon wobble position) in tRNAs with GU(N) anticodons (tRNA-Asp, -Asn, -His and -Tyr), resulting in the hypermodified nucleoside queuosine (7-(((4,5-cis-dihydroxy-2-cyclopenten-1-yl)amino)methyl)-7-deazaguanosine). The chain is Queuine tRNA-ribosyltransferase accessory subunit 2 from Drosophila persimilis (Fruit fly).